Reading from the N-terminus, the 223-residue chain is Ribonuclease T (223 aa).

The Exonuclease domain occupies 20–194 (VVIDVETAGF…YDTERTAELF (175 aa)). The Mg(2+) site is built by Asp23, Glu25, His181, and Asp186. His181 functions as the Proton donor/acceptor in the catalytic mechanism.

Belongs to the RNase T family. As to quaternary structure, homodimer. It depends on Mg(2+) as a cofactor.

Its function is as follows. Trims short 3' overhangs of a variety of RNA species, leaving a one or two nucleotide 3' overhang. Responsible for the end-turnover of tRNA: specifically removes the terminal AMP residue from uncharged tRNA (tRNA-C-C-A). Also appears to be involved in tRNA biosynthesis. This chain is Ribonuclease T, found in Shewanella sp. (strain W3-18-1).